Here is a 249-residue protein sequence, read N- to C-terminus: Proteasome activator complex subunit 1 (249 aa).

Positions 60-102 (PLDIPVPDPVKEKEKEERKKQQEKEEKDEKKKGDEDDKGPPCG) are disordered. Residues 68–98 (PVKEKEKEERKKQQEKEEKDEKKKGDEDDKG) are compositionally biased toward basic and acidic residues.

This sequence belongs to the PA28 family. As to quaternary structure, heterodimer of PSME1 and PSME2, which forms a hexameric ring. PSME1 can form homoheptamers.

Its function is as follows. Implicated in immunoproteasome assembly and required for efficient antigen processing. The PA28 activator complex enhances the generation of class I binding peptides by altering the cleavage pattern of the proteasome. This chain is Proteasome activator complex subunit 1 (Psme1), found in Rattus norvegicus (Rat).